A 318-amino-acid polypeptide reads, in one-letter code: Dual specificity protein phosphatase 2 (318 aa).

The 122-residue stretch at 27-148 (EAERTLLLDC…FQTYCPDLCS (122 aa)) folds into the Rhodanese domain. The Tyrosine-protein phosphatase domain maps to 176–317 (GPVEILPYLY…LLQLETQVLC (142 aa)). C261 functions as the Phosphocysteine intermediate in the catalytic mechanism.

The protein belongs to the protein-tyrosine phosphatase family. Non-receptor class dual specificity subfamily. Interacts with MAPK14; this interaction does not lead to catalytic activation of DUSP2 and dephosphrylation of MAPK14. In terms of tissue distribution, in hematopoietic tissues such as spleen and thymus.

It localises to the nucleus. It catalyses the reaction O-phospho-L-tyrosyl-[protein] + H2O = L-tyrosyl-[protein] + phosphate. It carries out the reaction O-phospho-L-threonyl-[protein] + H2O = L-threonyl-[protein] + phosphate. Its function is as follows. Dephosphorylates both phosphorylated Thr and Tyr residues in MAPK1, and dephosphorylation of phosphotyrosine is slightly faster than that of phosphothreonine. Can dephosphorylate MAPK1. In Mus musculus (Mouse), this protein is Dual specificity protein phosphatase 2.